The primary structure comprises 390 residues: Pre-mycofactocin synthase (390 aa).

The FMN hydroxy acid dehydrogenase domain maps to 1–383; the sequence is MADEWFETVA…RSDDILIPAD (383 aa). Residues S108, Q128, T156, and K254 each coordinate FMN. The active-site Proton acceptor is H278. FMN is bound by residues 309-313 and 332-333; these read DGGIR and GR.

It belongs to the FMN-dependent alpha-hydroxy acid dehydrogenase family. It depends on FMN as a cofactor.

It catalyses the reaction 3-amino-5-[(4-hydroxyphenyl)methyl]-4,4-dimethyl-2-pyrrolidin-2-one + O2 + H2O = pre-mycofactocin + H2O2 + NH4(+). Involved in the biosynthesis of the enzyme cofactor mycofactocin (MFT). Catalyzes the oxidative deamination of AHDP (3-amino-5-[(4-hydroxyphenyl)methyl]-4,4-dimethyl-2-pyrrolidin-2-one), forming an alpha-keto amide moiety on the resulting molecule, which is called pre-mycofactocin (PMFT). This reaction occurs via a 5-[(4-hydroxyphenyl)methyl]-3-imino-4,4-dimethylpyrrolidin-2-one intermediate, which converts to PMFT. The alpha-keto amide moiety is the redox-active center for the redox activity of mycofactocin. The polypeptide is Pre-mycofactocin synthase (Mycobacterium ulcerans (strain Agy99)).